Reading from the N-terminus, the 431-residue chain is Pyroglutamylated RF-amide peptide receptor (431 aa).

Residues 1–46 (MQALNITPEQFSRLLRDHNLTREQFIALYRLRPLVYTPELPGRAKL) are Extracellular-facing. A glycan (N-linked (GlcNAc...) asparagine) is linked at Asn19. The helical transmembrane segment at 47-67 (ALVLTGVLIFALALFGNALVF) threads the bilayer. Over 68–81 (YVVTRSKAMRTVTN) the chain is Cytoplasmic. The chain crosses the membrane as a helical span at residues 82 to 102 (IFICSLALSDLLITFFCIPVT). Residues 103 to 120 (MLQNISDNWLGGAFICKM) are Extracellular-facing. Residues 121 to 141 (VPFVQSTAVVTEILTMTCIAV) form a helical membrane-spanning segment. Residues 142–162 (ERHQGLVHPFKMKWQYTNRRA) are Cytoplasmic-facing. A helical transmembrane segment spans residues 163 to 183 (FTMLGVVWLVAVIVGSPMWHV). Residues 184 to 212 (QQLEIKYDFLYEKEHICCLEEWTSPVHQK) are Extracellular-facing. A helical membrane pass occupies residues 213–233 (IYTTFILVILFLLPLMVMLIL). The Cytoplasmic segment spans residues 234–271 (YSKIGYELWIKKRVGDGSVLRTIHGKEMSKIARKKKRA). The chain crosses the membrane as a helical span at residues 272–292 (VIMMVTVVALFAVCWAPFHVV). Residues 293–311 (HMMIEYSNFEKEYDDVTIK) lie on the Extracellular side of the membrane. Residues 312–332 (MIFAIVQIIGFSNSICNPIVY) form a helical membrane-spanning segment. The Cytoplasmic segment spans residues 333-431 (AFMNENFKKN…AENSPLDSGH (99 aa)).

It belongs to the G-protein coupled receptor 1 family. As to expression, expressed widely in the brain with high levels in the hypothalamus, trigeminal ganglia and vestibular neurons, and moderate levels in the amygdala, cortex, pituitary, hippocampus, thalamus, caudate nucleus and medulla oblongata. In peripheral tissues, expressed at high levels in the retina and at moderate levels in the heart, kidney, testis and thyroid.

Its subcellular location is the cell membrane. Its function is as follows. Receptor for the orexigenic neuropeptide QRFP. The activity of this receptor is mediated by G proteins that modulate adenylate cyclase activity and intracellular calcium levels. This is Pyroglutamylated RF-amide peptide receptor (QRFPR) from Homo sapiens (Human).